A 502-amino-acid chain; its full sequence is Mannitol dehydrogenase 2 (502 aa).

Belongs to the mannitol dehydrogenase family.

It carries out the reaction D-mannitol + NAD(+) = D-fructose + NADH + H(+). Functionally, catalyzes the NAD(H)-dependent interconversion of D-fructose and D-mannitol in the mannitol metabolic pathway. The polypeptide is Mannitol dehydrogenase 2 (Saccharomyces cerevisiae (strain ATCC 204508 / S288c) (Baker's yeast)).